A 365-amino-acid polypeptide reads, in one-letter code: Glutamate 5-kinase 1 (365 aa).

Lys-9 contacts ATP. Substrate-binding residues include Ser-49, Asp-136, and Asn-148. ATP contacts are provided by residues Thr-168–Asp-169 and Thr-210–Lys-216. A PUA domain is found at Ser-276–Glu-353.

It belongs to the glutamate 5-kinase family.

It is found in the cytoplasm. The catalysed reaction is L-glutamate + ATP = L-glutamyl 5-phosphate + ADP. Its pathway is amino-acid biosynthesis; L-proline biosynthesis; L-glutamate 5-semialdehyde from L-glutamate: step 1/2. Catalyzes the transfer of a phosphate group to glutamate to form L-glutamate 5-phosphate. In Bacillus licheniformis (strain ATCC 14580 / DSM 13 / JCM 2505 / CCUG 7422 / NBRC 12200 / NCIMB 9375 / NCTC 10341 / NRRL NRS-1264 / Gibson 46), this protein is Glutamate 5-kinase 1.